Consider the following 383-residue polypeptide: S-adenosylmethionine synthase (383 aa).

Residue His-15 coordinates ATP. Asp-17 contacts Mg(2+). Glu-43 lines the K(+) pocket. L-methionine contacts are provided by Glu-56 and Gln-99. Residues 99 to 109 (QSPDINQGVDR) form a flexible loop region. Residues 164-166 (DAK), 230-231 (RF), Asp-239, 245-246 (RK), Ala-262, and Lys-266 contribute to the ATP site. Asp-239 provides a ligand contact to L-methionine. Position 270 (Lys-270) interacts with L-methionine.

It belongs to the AdoMet synthase family. In terms of assembly, homotetramer; dimer of dimers. Mg(2+) is required as a cofactor. Requires K(+) as cofactor.

It is found in the cytoplasm. It carries out the reaction L-methionine + ATP + H2O = S-adenosyl-L-methionine + phosphate + diphosphate. The protein operates within amino-acid biosynthesis; S-adenosyl-L-methionine biosynthesis; S-adenosyl-L-methionine from L-methionine: step 1/1. Functionally, catalyzes the formation of S-adenosylmethionine (AdoMet) from methionine and ATP. The overall synthetic reaction is composed of two sequential steps, AdoMet formation and the subsequent tripolyphosphate hydrolysis which occurs prior to release of AdoMet from the enzyme. This is S-adenosylmethionine synthase from Pectobacterium atrosepticum (strain SCRI 1043 / ATCC BAA-672) (Erwinia carotovora subsp. atroseptica).